We begin with the raw amino-acid sequence, 193 residues long: Frataxin, mitochondrial (193 aa).

The N-terminal 72 residues, 1–72, are a transit peptide targeting the mitochondrion; it reads MIFNFLNKAS…KQQQQLSKSF (72 aa).

The protein belongs to the frataxin family. As to quaternary structure, monomer. Oligomer.

The protein resides in the mitochondrion. The enzyme catalyses 4 Fe(2+) + O2 + 4 H(+) = 4 Fe(3+) + 2 H2O. Its function is as follows. Promotes the biosynthesis of heme as well as the assembly and repair of iron-sulfur clusters by delivering Fe(2+) to proteins involved in these pathways. May play a role in the protection against iron-catalyzed oxidative stress through its ability to catalyze the oxidation of Fe(2+) to Fe(3+). May be able to store large amounts of the metal in the form of a ferrihydrite mineral by oligomerization. This Dictyostelium discoideum (Social amoeba) protein is Frataxin, mitochondrial (fxn).